Here is a 41-residue protein sequence, read N- to C-terminus: Large ribosomal subunit protein bL36 (41 aa).

This sequence belongs to the bacterial ribosomal protein bL36 family.

The protein is Large ribosomal subunit protein bL36 of Cereibacter sphaeroides (strain ATCC 17029 / ATH 2.4.9) (Rhodobacter sphaeroides).